The primary structure comprises 270 residues: Orotidine 5'-phosphate decarboxylase (270 aa).

Catalysis depends on lysine 95, which acts as the Proton donor.

This sequence belongs to the OMP decarboxylase family. Type 2 subfamily.

It catalyses the reaction orotidine 5'-phosphate + H(+) = UMP + CO2. The protein operates within pyrimidine metabolism; UMP biosynthesis via de novo pathway; UMP from orotate: step 2/2. The protein is Orotidine 5'-phosphate decarboxylase of Azoarcus sp. (strain BH72).